Consider the following 455-residue polypeptide: Bifunctional protein GlmU (455 aa).

Residues 1–228 (MNNTLTTIIL…EFEIEGVNNR (228 aa)) are pyrophosphorylase. UDP-N-acetyl-alpha-D-glucosamine is bound by residues 10-13 (LAAG), lysine 24, glutamine 75, 80-81 (GT), 102-104 (YGD), glycine 138, glutamate 153, asparagine 168, and asparagine 226. A Mg(2+)-binding site is contributed by aspartate 104. Asparagine 226 serves as a coordination point for Mg(2+). Residues 229–249 (QQLAQLERKWQAKLVEDLQVQ) are linker. Residues 250–455 (GVQFADPNRV…DNYQRPEKKK (206 aa)) form an N-acetyltransferase region. UDP-N-acetyl-alpha-D-glucosamine is bound by residues arginine 332 and lysine 350. Catalysis depends on histidine 362, which acts as the Proton acceptor. The UDP-N-acetyl-alpha-D-glucosamine site is built by tyrosine 365 and asparagine 376. Acetyl-CoA-binding positions include alanine 379, 385–386 (NY), alanine 422, and arginine 439.

This sequence in the N-terminal section; belongs to the N-acetylglucosamine-1-phosphate uridyltransferase family. In the C-terminal section; belongs to the transferase hexapeptide repeat family. In terms of assembly, homotrimer. Mg(2+) serves as cofactor.

Its subcellular location is the cytoplasm. The enzyme catalyses alpha-D-glucosamine 1-phosphate + acetyl-CoA = N-acetyl-alpha-D-glucosamine 1-phosphate + CoA + H(+). It carries out the reaction N-acetyl-alpha-D-glucosamine 1-phosphate + UTP + H(+) = UDP-N-acetyl-alpha-D-glucosamine + diphosphate. Its pathway is nucleotide-sugar biosynthesis; UDP-N-acetyl-alpha-D-glucosamine biosynthesis; N-acetyl-alpha-D-glucosamine 1-phosphate from alpha-D-glucosamine 6-phosphate (route II): step 2/2. It participates in nucleotide-sugar biosynthesis; UDP-N-acetyl-alpha-D-glucosamine biosynthesis; UDP-N-acetyl-alpha-D-glucosamine from N-acetyl-alpha-D-glucosamine 1-phosphate: step 1/1. It functions in the pathway bacterial outer membrane biogenesis; LPS lipid A biosynthesis. Functionally, catalyzes the last two sequential reactions in the de novo biosynthetic pathway for UDP-N-acetylglucosamine (UDP-GlcNAc). The C-terminal domain catalyzes the transfer of acetyl group from acetyl coenzyme A to glucosamine-1-phosphate (GlcN-1-P) to produce N-acetylglucosamine-1-phosphate (GlcNAc-1-P), which is converted into UDP-GlcNAc by the transfer of uridine 5-monophosphate (from uridine 5-triphosphate), a reaction catalyzed by the N-terminal domain. This chain is Bifunctional protein GlmU, found in Psychrobacter sp. (strain PRwf-1).